Here is a 347-residue protein sequence, read N- to C-terminus: Elongation factor Ts (347 aa).

An involved in Mg(2+) ion dislocation from EF-Tu region spans residues threonine 80–valine 83.

Belongs to the EF-Ts family.

Its subcellular location is the cytoplasm. Its function is as follows. Associates with the EF-Tu.GDP complex and induces the exchange of GDP to GTP. It remains bound to the aminoacyl-tRNA.EF-Tu.GTP complex up to the GTP hydrolysis stage on the ribosome. The sequence is that of Elongation factor Ts from Streptococcus gordonii (strain Challis / ATCC 35105 / BCRC 15272 / CH1 / DL1 / V288).